Here is a 504-residue protein sequence, read N- to C-terminus: Lysine--tRNA ligase (504 aa).

Glutamate 414 and glutamate 421 together coordinate Mg(2+).

This sequence belongs to the class-II aminoacyl-tRNA synthetase family. As to quaternary structure, homodimer. Requires Mg(2+) as cofactor.

The protein resides in the cytoplasm. It carries out the reaction tRNA(Lys) + L-lysine + ATP = L-lysyl-tRNA(Lys) + AMP + diphosphate. The protein is Lysine--tRNA ligase of Photorhabdus laumondii subsp. laumondii (strain DSM 15139 / CIP 105565 / TT01) (Photorhabdus luminescens subsp. laumondii).